The primary structure comprises 421 residues: Serine protease HTRA2, mitochondrial (421 aa).

A helical membrane pass occupies residues 63-81; sequence VIRFFVPFSLGALASTMVA. The IAP-binding motif lies at 74 to 77; sequence ALAS. Residues 138-301 form a serine protease region; that stretch reads SNGSGFVIEQ…IPIDYVKVFL (164 aa). Catalysis depends on charge relay system residues histidine 156, aspartate 188, and serine 265. The region spanning 324–409 is the PDZ domain; it reads MGITMLTLTP…ELDIVILRGV (86 aa).

Belongs to the peptidase S1C family. As to quaternary structure, interacts with th/DIAP1 (via BIR 2 domain).

It localises to the mitochondrion intermembrane space. Its subcellular location is the mitochondrion membrane. It catalyses the reaction Cleavage of non-polar aliphatic amino-acids at the P1 position, with a preference for Val, Ile and Met. At the P2 and P3 positions, Arg is selected most strongly with a secondary preference for other hydrophilic residues.. Functionally, serine protease that shows proteolytic activity against a non-specific substrate beta-casein. Promotes or induces cell death either by direct binding to and inhibition of BIRC proteins (also called inhibitor of apoptosis proteins, IAPs), leading to an increase in caspase activity, or by a BIRC inhibition-independent, caspase-independent and serine protease activity-dependent mechanism. Can antagonize antiapoptotic activity of th/Diap1 by directly inducing the degradation of th/Diap1. The protein is Serine protease HTRA2, mitochondrial of Drosophila virilis (Fruit fly).